A 127-amino-acid polypeptide reads, in one-letter code: DNA-directed RNA polymerase subunit omega (127 aa).

Belongs to the RNA polymerase subunit omega family. The RNAP catalytic core consists of 2 alpha, 1 beta, 1 beta' and 1 omega subunit. When a sigma factor is associated with the core the holoenzyme is formed, which can initiate transcription.

It catalyses the reaction RNA(n) + a ribonucleoside 5'-triphosphate = RNA(n+1) + diphosphate. In terms of biological role, promotes RNA polymerase assembly. Latches the N- and C-terminal regions of the beta' subunit thereby facilitating its interaction with the beta and alpha subunits. This chain is DNA-directed RNA polymerase subunit omega (rpoZ), found in Rickettsia prowazekii (strain Madrid E).